Reading from the N-terminus, the 40-residue chain is MADTTGRIPLWLIGTVAGIAVIGLVGVFFYGSYSGLGSSL.

A helical transmembrane segment spans residues 8–28; it reads IPLWLIGTVAGIAVIGLVGVF.

Belongs to the PsbJ family. As to quaternary structure, PSII is composed of 1 copy each of membrane proteins PsbA, PsbB, PsbC, PsbD, PsbE, PsbF, PsbH, PsbI, PsbJ, PsbK, PsbL, PsbM, PsbT, PsbX, PsbY, PsbZ, Psb30/Ycf12, at least 3 peripheral proteins of the oxygen-evolving complex and a large number of cofactors. It forms dimeric complexes.

It is found in the plastid. The protein resides in the chloroplast thylakoid membrane. Functionally, one of the components of the core complex of photosystem II (PSII). PSII is a light-driven water:plastoquinone oxidoreductase that uses light energy to abstract electrons from H(2)O, generating O(2) and a proton gradient subsequently used for ATP formation. It consists of a core antenna complex that captures photons, and an electron transfer chain that converts photonic excitation into a charge separation. This Secale cereale (Rye) protein is Photosystem II reaction center protein J.